Consider the following 162-residue polypeptide: 3-isopropylmalate dehydratase small subunit (162 aa).

It belongs to the LeuD family. LeuD type 2 subfamily. Heterodimer of LeuC and LeuD.

The enzyme catalyses (2R,3S)-3-isopropylmalate = (2S)-2-isopropylmalate. The protein operates within amino-acid biosynthesis; L-leucine biosynthesis; L-leucine from 3-methyl-2-oxobutanoate: step 2/4. Catalyzes the isomerization between 2-isopropylmalate and 3-isopropylmalate, via the formation of 2-isopropylmaleate. This is 3-isopropylmalate dehydratase small subunit from Pyrobaculum neutrophilum (strain DSM 2338 / JCM 9278 / NBRC 100436 / V24Sta) (Thermoproteus neutrophilus).